Here is a 61-residue protein sequence, read N- to C-terminus: Cobrotoxin-b (61 aa).

4 disulfides stabilise this stretch: Cys-3-Cys-23, Cys-17-Cys-40, Cys-42-Cys-53, and Cys-54-Cys-59.

It belongs to the three-finger toxin family. Short-chain subfamily. Type I alpha-neurotoxin sub-subfamily. Expressed by the venom gland.

Its subcellular location is the secreted. In terms of biological role, produces peripheral paralysis by blocking neuromuscular transmission at the postsynaptic site. Binds to the nicotinic acetylcholine receptor. The sequence is that of Cobrotoxin-b from Naja kaouthia (Monocled cobra).